The chain runs to 232 residues: Rho-related GTP-binding protein Rho6 (232 aa).

GTP contacts are provided by residues 23–28, 38–45, 67–71, 125–128, and 169–170; these read QCGKTA, YPETYVPT, DTSGS, CKTD, and AF. An Effector region motif is present at residues 42 to 50; the sequence is YVPTVFENY. Position 229 is a cysteine methyl ester (cysteine 229). Residue cysteine 229 is the site of S-geranylgeranyl cysteine attachment. A propeptide spans 230–232 (removed in mature form); it reads SIM.

The protein belongs to the small GTPase superfamily. Rho family. In terms of assembly, binds GRB7 and PLXNB1. Interacts with PLXNA2. Interacts with UBXD5.

The protein localises to the cell membrane. Its subcellular location is the cytoplasm. The protein resides in the cytoskeleton. Its function is as follows. Lacks intrinsic GTPase activity. Has a low affinity for GDP, and constitutively binds GTP. Controls rearrangements of the actin cytoskeleton. Induces the Rac-dependent neuritic process formation in part by disruption of the cortical actin filaments. Causes the formation of many neuritic processes from the cell body with disruption of the cortical actin filaments. The polypeptide is Rho-related GTP-binding protein Rho6 (Rnd1) (Mus musculus (Mouse)).